Reading from the N-terminus, the 367-residue chain is dTDP-4-amino-4,6-dideoxy-D-glucose transaminase (367 aa).

Lys-184 carries the N6-(pyridoxal phosphate)lysine modification.

Belongs to the DegT/DnrJ/EryC1 family. Pyridoxal 5'-phosphate serves as cofactor.

It catalyses the reaction dTDP-4-amino-4,6-dideoxy-D-glucose + 2-oxoglutarate = dTDP-4-dehydro-6-deoxy-alpha-D-glucose + L-glutamate. The protein operates within bacterial outer membrane biogenesis; lipopolysaccharide biosynthesis. In terms of biological role, catalyzes the conversion of dTDP-4-dehydro-6-deoxy-D-glucose (dTDP-D-Glc4O) to dTDP-4-amino-4,6-dideoxy-D-glucose (dTDP-D-Qui4N). L-glutamine can also be used as amino donor. This Shigella dysenteriae protein is dTDP-4-amino-4,6-dideoxy-D-glucose transaminase (vioA).